The primary structure comprises 467 residues: Protein PHOSPHATE STARVATION RESPONSE 3 (467 aa).

Residues 227 to 266 are disordered; that stretch reads MSLPVSSCSDQEDLQDARSPAKVQLSSSRSSSGTASCNKP. Residues 262–322 form the HTH myb-type domain; that stretch reads SCNKPRLRWT…HLQKYRLAKY (61 aa). Residues 293 to 318 constitute a DNA-binding region (H-T-H motif); sequence PKGVLKLMKVEGLTIYHIKSHLQKYR. Positions 327–337 are enriched in basic and acidic residues; it reads KEDKKQEEKKT. 2 disordered regions span residues 327–353 and 400–467; these read KEDKKQEEKKTKSVANGNDHAKKKSAQ and RESI…VHDE. Residues 402-412 show a composition bias toward polar residues; the sequence is SISSMTSTTEG. Basic and acidic residues-rich tracts occupy residues 419 to 428 and 438 to 467; these read PMEKTEDKAE and RITDTDAECHSKVDNKKTKPQADLEMVHDE.

In terms of tissue distribution, expressed in the root cap and in the exodermis of the root, in the root tip of lateral roots, in the mesophyll cells of the leaf, in pollen, vascular cylinder of the anther and the veins of the lemma, palea and pistils, and in the xylem and phloem regions of large vascular bundles, small vascular bundles and diffuse vascular bundles in node I.

It localises to the nucleus. Functionally, transcription factor involved in phosphate starvation signaling. Binds to P1BS, an imperfect palindromic sequence 5'-GNATATNC-3', to promote the expression of inorganic phosphate (Pi) starvation-responsive genes. Functionally redundant with PHR1 and PHR2 in regulating Pi starvation response and Pi homeostasis. The chain is Protein PHOSPHATE STARVATION RESPONSE 3 from Oryza sativa subsp. japonica (Rice).